The following is a 393-amino-acid chain: Small ribosomal subunit protein bS1 (393 aa).

S1 motif domains are found at residues 16 to 90, 108 to 173, 194 to 262, and 279 to 348; these read GDKV…LSKR, NQTI…LSRK, and GDVI…LSIK. Residues 356 to 369 are compositionally biased toward polar residues; sequence VIESDSETTQSYLD. A disordered region spans residues 356-381; it reads VIESDSETTQSYLDNGSDDEDNPTLG.

It belongs to the bacterial ribosomal protein bS1 family.

In terms of biological role, binds mRNA; thus facilitating recognition of the initiation point. It is needed to translate mRNA with a short Shine-Dalgarno (SD) purine-rich sequence. In Staphylococcus saprophyticus subsp. saprophyticus (strain ATCC 15305 / DSM 20229 / NCIMB 8711 / NCTC 7292 / S-41), this protein is Small ribosomal subunit protein bS1 (rpsA).